A 212-amino-acid polypeptide reads, in one-letter code: Ribonuclease HII (212 aa).

In terms of domain architecture, RNase H type-2 spans 19–212; it reads CIIVGVDEVG…SKISYMFKNS (194 aa). Residues D25, E26, and D120 each coordinate a divalent metal cation.

The protein belongs to the RNase HII family. It depends on Mn(2+) as a cofactor. Mg(2+) is required as a cofactor.

It is found in the cytoplasm. It carries out the reaction Endonucleolytic cleavage to 5'-phosphomonoester.. In terms of biological role, endonuclease that specifically degrades the RNA of RNA-DNA hybrids. The sequence is that of Ribonuclease HII from Ehrlichia ruminantium (strain Welgevonden).